We begin with the raw amino-acid sequence, 269 residues long: Octanoyltransferase LipM (269 aa).

In terms of domain architecture, BPL/LPL catalytic spans 31 to 239 (NHGAPVLRFY…GFSEGFEVNF (209 aa)). The active-site Acyl-thioester intermediate is Cys-141.

This sequence belongs to the octanoyltransferase LipM family. Monomer.

The catalysed reaction is octanoyl-[ACP] + L-lysyl-[protein] = N(6)-octanoyl-L-lysyl-[protein] + holo-[ACP] + H(+). The protein operates within protein modification; protein lipoylation via endogenous pathway; protein N(6)-(lipoyl)lysine from octanoyl-[acyl-carrier-protein]. In terms of biological role, catalyzes the transfer of endogenously produced octanoic acid from octanoyl-acyl-carrier-protein onto the lipoyl domain of GcvH, an intermediate carrier during protein lipoylation. The chain is Octanoyltransferase LipM from Carboxydothermus hydrogenoformans (strain ATCC BAA-161 / DSM 6008 / Z-2901).